The chain runs to 154 residues: Transcriptional repressor NrdR (154 aa).

Residues Cys-3–Cys-34 fold into a zinc finger. Residues Leu-49–Asp-139 enclose the ATP-cone domain.

It belongs to the NrdR family. Zn(2+) is required as a cofactor.

In terms of biological role, negatively regulates transcription of bacterial ribonucleotide reductase nrd genes and operons by binding to NrdR-boxes. This is Transcriptional repressor NrdR from Chelativorans sp. (strain BNC1).